The primary structure comprises 273 residues: Energy-coupling factor transporter ATP-binding protein EcfA (273 aa).

In terms of domain architecture, ABC transporter spans 2–237 (ISIRDLTYFY…RASLLALGLA (236 aa)). 36-43 (GRNGSGKS) provides a ligand contact to ATP.

It belongs to the ABC transporter superfamily. Energy-coupling factor EcfA family. Forms a stable energy-coupling factor (ECF) transporter complex composed of 2 membrane-embedded substrate-binding proteins (S component), 2 ATP-binding proteins (A component) and 2 transmembrane proteins (T component).

The protein localises to the cell membrane. Its function is as follows. ATP-binding (A) component of a common energy-coupling factor (ECF) ABC-transporter complex. Unlike classic ABC transporters this ECF transporter provides the energy necessary to transport a number of different substrates. This Syntrophomonas wolfei subsp. wolfei (strain DSM 2245B / Goettingen) protein is Energy-coupling factor transporter ATP-binding protein EcfA.